The following is a 332-amino-acid chain: 2-hydroxyacid dehydrogenase homolog 2 (332 aa).

NAD(+) is bound by residues 154–155 (KI), 233–235 (TSR), and Asp-259. Arg-235 is a catalytic residue. Glu-264 is an active-site residue. His-296 functions as the Proton donor in the catalytic mechanism. 296 to 299 (HQAF) provides a ligand contact to NAD(+).

This sequence belongs to the D-isomer specific 2-hydroxyacid dehydrogenase family.

The protein resides in the cytoplasm. It localises to the nucleus. The chain is 2-hydroxyacid dehydrogenase homolog 2 from Schizosaccharomyces pombe (strain 972 / ATCC 24843) (Fission yeast).